The sequence spans 133 residues: Snaclec purpureotin subunit alpha (133 aa).

Intrachain disulfides connect Cys-2/Cys-13, Cys-30/Cys-127, and Cys-102/Cys-119. Positions 9–128 (FKQYCYQIIK…CEQKHIFMCK (120 aa)) constitute a C-type lectin domain.

This sequence belongs to the snaclec family. As to quaternary structure, homodimer (non-covalently linked) of heterodimer of alpha and beta subunits (disulfide-linked). In terms of tissue distribution, expressed by the venom gland.

It is found in the secreted. In terms of biological role, snaclec that induces platelet aggregation without any cofactor in a dose-dependent manner. Its platelet aggregation effect is blocked by echicetin, suggesting it is a GPIb-binding protein which binds to the same or a closely related GPIb site on platelets as echicetin. This is Snaclec purpureotin subunit alpha from Trimeresurus purpureomaculatus (Mangrove pit viper).